A 536-amino-acid chain; its full sequence is Adenine deaminase (536 aa).

The segment at 1–24 (MTPSPHDLLHCGMNSQDRDETNGD) is disordered.

The protein belongs to the metallo-dependent hydrolases superfamily. Adenine deaminase family. It depends on Mn(2+) as a cofactor.

It catalyses the reaction adenine + H2O + H(+) = hypoxanthine + NH4(+). This chain is Adenine deaminase, found in Deinococcus radiodurans (strain ATCC 13939 / DSM 20539 / JCM 16871 / CCUG 27074 / LMG 4051 / NBRC 15346 / NCIMB 9279 / VKM B-1422 / R1).